The chain runs to 254 residues: Protein U52 (254 aa).

It belongs to the herpesviridae UL79 family.

The protein is Protein U52 (U52) of Homo sapiens (Human).